Here is a 150-residue protein sequence, read N- to C-terminus: Large ribosomal subunit protein bL9 (150 aa).

It belongs to the bacterial ribosomal protein bL9 family.

Binds to the 23S rRNA. This is Large ribosomal subunit protein bL9 from Neisseria meningitidis serogroup B (strain ATCC BAA-335 / MC58).